The sequence spans 347 residues: CD5 antigen-like (347 aa).

The signal sequence occupies residues 1–19 (MALLFSLILAICTRPGFLA). 3 SRCR domains span residues 24–125 (VRLV…ASCE), 138–239 (VRLA…VECE), and 244–346 (LRLV…VICS). Intrachain disulfides connect Cys-33–Cys-67, Cys-49–Cys-114, Cys-62–Cys-124, Cys-96–Cys-106, Cys-163–Cys-228, Cys-176–Cys-238, Cys-208–Cys-218, Cys-253–Cys-287, Cys-269–Cys-335, Cys-282–Cys-345, and Cys-315–Cys-325.

In terms of assembly, interacts with FASN; the interaction is direct. Interacts (via SRCR2 and SRCR3) with pentameric IgM (via Fc region); disulfide-linked. In terms of processing, not N-glycosylated. Probably not O-glycosylated. As to expression, expressed in spleen, lymph node, thymus, bone marrow, and fetal liver, but not in non-lymphoid tissues.

It localises to the secreted. The protein resides in the cytoplasm. Functionally, secreted protein that acts as a key regulator of lipid synthesis: mainly expressed by macrophages in lymphoid and inflamed tissues and regulates mechanisms in inflammatory responses, such as infection or atherosclerosis. Able to inhibit lipid droplet size in adipocytes. Following incorporation into mature adipocytes via CD36-mediated endocytosis, associates with cytosolic FASN, inhibiting fatty acid synthase activity and leading to lipolysis, the degradation of triacylglycerols into glycerol and free fatty acids (FFA). CD5L-induced lipolysis occurs with progression of obesity: participates in obesity-associated inflammation following recruitment of inflammatory macrophages into adipose tissues, a cause of insulin resistance and obesity-related metabolic disease. Regulation of intracellular lipids mediated by CD5L has a direct effect on transcription regulation mediated by nuclear receptors ROR-gamma (RORC). Acts as a key regulator of metabolic switch in T-helper Th17 cells. Regulates the expression of pro-inflammatory genes in Th17 cells by altering the lipid content and limiting synthesis of cholesterol ligand of RORC, the master transcription factor of Th17-cell differentiation. CD5L is mainly present in non-pathogenic Th17 cells, where it decreases the content of polyunsaturated fatty acyls (PUFA), affecting two metabolic proteins MSMO1 and CYP51A1, which synthesize ligands of RORC, limiting RORC activity and expression of pro-inflammatory genes. Participates in obesity-associated autoimmunity via its association with IgM, interfering with the binding of IgM to Fcalpha/mu receptor and enhancing the development of long-lived plasma cells that produce high-affinity IgG autoantibodies. Also acts as an inhibitor of apoptosis in macrophages: promotes macrophage survival from the apoptotic effects of oxidized lipids in case of atherosclerosis. Involved in early response to microbial infection against various pathogens by acting as a pattern recognition receptor and by promoting autophagy. The sequence is that of CD5 antigen-like (CD5L) from Homo sapiens (Human).